The following is a 592-amino-acid chain: Transducer of Cdc42-dependent actin assembly protein 1 homolog (592 aa).

The F-BAR domain occupies 3–267 (DSCSWDQLWD…DIGLIDPSRD (265 aa)). Disordered regions lie at residues 343 to 366 (FGGG…QQRA) and 447 to 519 (SATS…DELY). The REM-1 domain occupies 359–436 (TLPPQQRARK…IQKFKILLDD (78 aa)). Residues 363-441 (QQRARKIAGK…ILLDDVNAQL (79 aa)) adopt a coiled-coil conformation. Residues 447–457 (SATSVGGSDTP) show a composition bias toward polar residues. The segment covering 459–474 (SIRSVSSASSGVTSRV) has biased composition (low complexity). The segment covering 495 to 510 (FSGSNGGSDTDPTING) has biased composition (polar residues). Residues 527–589 (PVLGEAIAQF…PSSYLKVTWF (63 aa)) form the SH3 domain.

It belongs to the FNBP1 family. As to quaternary structure, interacts (via SH3 domain) with wsp-1. Interacts with cdc-42 and (via SH3 domain) with wve-1. In terms of tissue distribution, expressed in the germline and specifically in the gonads.

The protein localises to the cell junction. It localises to the apical cell membrane. It is found in the basolateral cell membrane. The protein resides in the cytoplasmic vesicle. Its subcellular location is the cytoplasm. The protein localises to the perinuclear region. It localises to the recycling endosome. Its function is as follows. Plays a role in protein trafficking, actin organization and embryonic morphogenesis. Potentially acts as a cdc-42 effector. May play a role in hypodermal P-cell nuclear positioning. Together with toca-2, is required for protein trafficking regulating yolk protein clathrin-mediated endocytosis by oocytes during oogenesis and retrograde recycling and the sorting of recycling endosome cargo proteins such as mig-14. Also, together with toca-2, controls the distribution of actin at cell junctions. This Caenorhabditis elegans protein is Transducer of Cdc42-dependent actin assembly protein 1 homolog.